The primary structure comprises 424 residues: Phosphomethylpyrimidine synthase (424 aa).

Substrate is bound by residues methionine 94, tyrosine 123, histidine 162, 184–186 (SRG), 225–228 (NGMR), and glutamate 264. Histidine 268 contacts Zn(2+). Tyrosine 291 lines the substrate pocket. Residue histidine 332 coordinates Zn(2+). 3 residues coordinate [4Fe-4S] cluster: cysteine 406, cysteine 409, and cysteine 413.

The protein belongs to the ThiC family. [4Fe-4S] cluster is required as a cofactor.

The enzyme catalyses 5-amino-1-(5-phospho-beta-D-ribosyl)imidazole + S-adenosyl-L-methionine = 4-amino-2-methyl-5-(phosphooxymethyl)pyrimidine + CO + 5'-deoxyadenosine + formate + L-methionine + 3 H(+). It participates in cofactor biosynthesis; thiamine diphosphate biosynthesis. Its function is as follows. Catalyzes the synthesis of the hydroxymethylpyrimidine phosphate (HMP-P) moiety of thiamine from aminoimidazole ribotide (AIR) in a radical S-adenosyl-L-methionine (SAM)-dependent reaction. The chain is Phosphomethylpyrimidine synthase from Methanosphaerula palustris (strain ATCC BAA-1556 / DSM 19958 / E1-9c).